A 199-amino-acid chain; its full sequence is Recombination protein RecR (199 aa).

The segment at 56–71 (CSICFNVSQDDQCRIC) adopts a C4-type zinc-finger fold. The Toprim domain occupies 79 to 174 (SVLCVVEEYK…RVTRLASGLP (96 aa)).

This sequence belongs to the RecR family.

Its function is as follows. May play a role in DNA repair. It seems to be involved in an RecBC-independent recombinational process of DNA repair. It may act with RecF and RecO. This chain is Recombination protein RecR, found in Nocardioides sp. (strain ATCC BAA-499 / JS614).